Reading from the N-terminus, the 1163-residue chain is Ankyrin repeat-containing protein F37A4.4 (1163 aa).

An ANK repeat occupies 856-885 (YGNTALHVATRRGYQNLVEILIKHGADRSF). One can recognise a BRCT domain in the interval 929–1025 (LCVPEKFPVS…KLIEKDCDYL (97 aa)).

The sequence is that of Ankyrin repeat-containing protein F37A4.4 from Caenorhabditis elegans.